We begin with the raw amino-acid sequence, 100 residues long: MELGAATVCVTAVCFNFLVAYSSSPLTLSILSSSICLDDFLGEGVPSVGLFFMEVKNLAKVACLGFLPAEEGNEDDINNGNLDFKGRADERRQPVSNLRM.

The disordered stretch occupies residues Asn-78–Met-100. Over residues Phe-84–Gln-93 the composition is skewed to basic and acidic residues.

This is an uncharacterized protein from Saccharomyces cerevisiae (strain ATCC 204508 / S288c) (Baker's yeast).